A 189-amino-acid chain; its full sequence is Ras-like protein rasC (189 aa).

Gly-11 to Ser-18 is a binding site for GTP. The short motif at Tyr-33–Tyr-41 is the Effector region element. GTP-binding positions include Asp-58–Gln-62 and Asn-117–Asp-120. A Cysteine methyl ester modification is found at Cys-186. Cys-186 carries the S-geranylgeranyl cysteine lipid modification. Residues Ile-187–Leu-189 constitute a propeptide, removed in mature form.

Belongs to the small GTPase superfamily. Ras family.

The protein resides in the cell membrane. The enzyme catalyses GTP + H2O = GDP + phosphate + H(+). With respect to regulation, alternates between an inactive form bound to GDP and an active form bound to GTP. Activated by a guanine nucleotide-exchange factor (GEF) and inactivated by a GTPase-activating protein (GAP). In terms of biological role, ras proteins bind GDP/GTP and possess intrinsic GTPase activity. The chain is Ras-like protein rasC (rasC) from Dictyostelium discoideum (Social amoeba).